A 203-amino-acid polypeptide reads, in one-letter code: Ribosomal RNA small subunit methyltransferase G (203 aa).

Residues Gly-73, Leu-78, 124-125 (VE), and Arg-139 contribute to the S-adenosyl-L-methionine site.

It belongs to the methyltransferase superfamily. RNA methyltransferase RsmG family.

The protein localises to the cytoplasm. It catalyses the reaction guanosine(527) in 16S rRNA + S-adenosyl-L-methionine = N(7)-methylguanosine(527) in 16S rRNA + S-adenosyl-L-homocysteine. In terms of biological role, specifically methylates the N7 position of guanine in position 527 of 16S rRNA. The polypeptide is Ribosomal RNA small subunit methyltransferase G (Haemophilus influenzae (strain PittEE)).